A 214-amino-acid polypeptide reads, in one-letter code: Ribonuclease HII (214 aa).

An RNase H type-2 domain is found at 27–214 (SVVAGIDEAG…SPIKQMCAIV (188 aa)). A divalent metal cation is bound by residues Asp-33, Glu-34, and Asp-126.

The protein belongs to the RNase HII family. It depends on Mn(2+) as a cofactor. The cofactor is Mg(2+).

The protein localises to the cytoplasm. It catalyses the reaction Endonucleolytic cleavage to 5'-phosphomonoester.. Its function is as follows. Endonuclease that specifically degrades the RNA of RNA-DNA hybrids. This Chlamydia pneumoniae (Chlamydophila pneumoniae) protein is Ribonuclease HII (rnhB).